The following is a 164-amino-acid chain: Low molecular weight phosphotyrosine protein phosphatase 2 (164 aa).

Catalysis depends on Cys14, which acts as the Nucleophile. Residue Arg20 is part of the active site. Residue Asp130 is the Proton donor of the active site.

The protein belongs to the low molecular weight phosphotyrosine protein phosphatase family. As to expression, cone cells and primary pigment cells in developing pupal retina.

The protein localises to the cytoplasm. The catalysed reaction is O-phospho-L-tyrosyl-[protein] + H2O = L-tyrosyl-[protein] + phosphate. The enzyme catalyses a phosphate monoester + H2O = an alcohol + phosphate. In terms of biological role, catalyzes the dephosphorylation of tyrosine phosphorylated proteins and low-MW aryl phosphates. Can contribute to the regulation of a variety of developmental processes. This is Low molecular weight phosphotyrosine protein phosphatase 2 (primo-2) from Drosophila melanogaster (Fruit fly).